The sequence spans 726 residues: PTS system glucose-specific EIICBA component (726 aa).

Residues 1–453 form the PTS EIIC type-1 domain; sequence MMKDTFKNVL…FNYATPGRNG (453 aa). The next 9 helical transmembrane spans lie at 18-38, 62-82, 90-110, 139-159, 184-204, 311-331, 344-364, 365-385, and 419-439; these read FGKA…MISI, IGWG…GGSW, AFAA…IFGV, VLEA…GFVG, FVPF…AAFW, FKVG…VAIY, GMMI…PIEY, MFMF…GAAF, and IVNF…IANF. A PTS EIIB type-1 domain is found at 473–555; that stretch reads GSQAVNIINL…QDILDSGEII (83 aa). Cys495 functions as the Phosphocysteine intermediate; for EIIB activity in the catalytic mechanism. Residues 596 to 700 enclose the PTS EIIA type-1 domain; the sequence is DPVFAQKMMG…ETSTVVVFTN (105 aa). His648 (tele-phosphohistidine intermediate; for EIIA activity) is an active-site residue.

The protein localises to the cell membrane. It catalyses the reaction N(pros)-phospho-L-histidyl-[protein] + D-glucose(out) = D-glucose 6-phosphate(in) + L-histidyl-[protein]. Functionally, the phosphoenolpyruvate-dependent sugar phosphotransferase system (sugar PTS), a major carbohydrate active transport system, catalyzes the phosphorylation of incoming sugar substrates concomitantly with their translocation across the cell membrane. This system is involved in glucose transport. The sequence is that of PTS system glucose-specific EIICBA component (exp5) from Streptococcus pneumoniae serotype 4 (strain ATCC BAA-334 / TIGR4).